We begin with the raw amino-acid sequence, 509 residues long: Coiled-coil domain-containing protein 181 (509 aa).

The segment covering 46–82 (ENINQDLKENETVMEHTKRHSDPDKSLQDEVSPRRND) has biased composition (basic and acidic residues). Disordered regions lie at residues 46 to 120 (ENIN…EEED) and 241 to 367 (PINN…EEKE). Composition is skewed to polar residues over residues 243–266 (NNAN…SVSG) and 300–334 (TCPS…STYC). Residues 335 to 375 (LSPRQKELQKQLEEKREKLKREEERRKIEEEKEKKRENDIV) adopt a coiled-coil conformation. Over residues 338 to 367 (RQKELQKQLEEKREKLKREEERRKIEEEKE) the composition is skewed to basic and acidic residues.

Belongs to the CCDC181 family. In terms of assembly, homodimer. Interacts with HOOK1. Interacts with HOOK2. Interacts with HOOK3.

It localises to the cytoplasm. Its subcellular location is the cytoskeleton. The protein localises to the cell projection. The protein resides in the cilium. It is found in the flagellum. In terms of biological role, microtubule-binding protein that localizes to the microtubular manchette of elongating spermatids. This chain is Coiled-coil domain-containing protein 181, found in Homo sapiens (Human).